Reading from the N-terminus, the 368-residue chain is Anhydro-N-acetylmuramic acid kinase (368 aa).

ATP is bound at residue 11–18 (GTSLDGID).

The protein belongs to the anhydro-N-acetylmuramic acid kinase family.

It catalyses the reaction 1,6-anhydro-N-acetyl-beta-muramate + ATP + H2O = N-acetyl-D-muramate 6-phosphate + ADP + H(+). Its pathway is amino-sugar metabolism; 1,6-anhydro-N-acetylmuramate degradation. The protein operates within cell wall biogenesis; peptidoglycan recycling. In terms of biological role, catalyzes the specific phosphorylation of 1,6-anhydro-N-acetylmuramic acid (anhMurNAc) with the simultaneous cleavage of the 1,6-anhydro ring, generating MurNAc-6-P. Is required for the utilization of anhMurNAc either imported from the medium or derived from its own cell wall murein, and thus plays a role in cell wall recycling. The protein is Anhydro-N-acetylmuramic acid kinase of Sulfurimonas denitrificans (strain ATCC 33889 / DSM 1251) (Thiomicrospira denitrificans (strain ATCC 33889 / DSM 1251)).